The following is a 55-amino-acid chain: Large ribosomal subunit protein bL33 (55 aa).

It belongs to the bacterial ribosomal protein bL33 family.

The protein is Large ribosomal subunit protein bL33 of Agrobacterium fabrum (strain C58 / ATCC 33970) (Agrobacterium tumefaciens (strain C58)).